Reading from the N-terminus, the 517-residue chain is Beta-galactoside alpha-2,6-sialyltransferase 2 (517 aa).

Residues 1–10 (MKPNLKQWKQ) are Cytoplasmic-facing. Residues 11–31 (FMLFGICAWGLLFLVIFVYFT) traverse the membrane as a helical; Signal-anchor for type II membrane protein segment. The Lumenal portion of the chain corresponds to 32-517 (DSNSVEPVPS…IHCPIKDHIT (486 aa)). 3 N-linked (GlcNAc...) asparagine glycosylation sites follow: asparagine 201, asparagine 298, and asparagine 328. 3 cysteine pairs are disulfide-bonded: cysteine 244-cysteine 510, cysteine 287-cysteine 439, and cysteine 457-cysteine 468.

Belongs to the glycosyltransferase 29 family.

It localises to the golgi apparatus. It is found in the golgi stack membrane. The catalysed reaction is a beta-D-galactoside + CMP-N-acetyl-beta-neuraminate = an N-acetyl-alpha-neuraminyl-(2-&gt;6)-beta-D-galactosyl derivative + CMP + H(+). In terms of biological role, transfers sialic acid from the donor of substrate CMP-sialic acid to galactose containing acceptor substrates. The sequence is that of Beta-galactoside alpha-2,6-sialyltransferase 2 (st6gal2) from Xenopus tropicalis (Western clawed frog).